Here is a 543-residue protein sequence, read N- to C-terminus: Bifunctional purine biosynthesis protein PurH (543 aa).

The MGS-like domain maps to 5–151; it reads NHARPIRRAL…KNHKDVTIVV (147 aa).

The protein belongs to the PurH family.

It catalyses the reaction (6R)-10-formyltetrahydrofolate + 5-amino-1-(5-phospho-beta-D-ribosyl)imidazole-4-carboxamide = 5-formamido-1-(5-phospho-D-ribosyl)imidazole-4-carboxamide + (6S)-5,6,7,8-tetrahydrofolate. It carries out the reaction IMP + H2O = 5-formamido-1-(5-phospho-D-ribosyl)imidazole-4-carboxamide. The protein operates within purine metabolism; IMP biosynthesis via de novo pathway; 5-formamido-1-(5-phospho-D-ribosyl)imidazole-4-carboxamide from 5-amino-1-(5-phospho-D-ribosyl)imidazole-4-carboxamide (10-formyl THF route): step 1/1. It participates in purine metabolism; IMP biosynthesis via de novo pathway; IMP from 5-formamido-1-(5-phospho-D-ribosyl)imidazole-4-carboxamide: step 1/1. This Shewanella oneidensis (strain ATCC 700550 / JCM 31522 / CIP 106686 / LMG 19005 / NCIMB 14063 / MR-1) protein is Bifunctional purine biosynthesis protein PurH.